Here is a 157-residue protein sequence, read N- to C-terminus: Mannose-specific lectin (157 aa).

A signal peptide (or 23; in 70% of the molecules) is located at residues Met-1–Pro-19. One can recognise a Bulb-type lectin domain in the interval Asp-24–Gly-132. Alpha-D-mannopyranose is bound by residues Gln-49, Asp-51, Asn-53, Tyr-57, Asp-60, Lys-61, Trp-64, Ala-65, Asn-67, Gln-80, Asp-82, Asn-84, Tyr-88, Ile-95, Trp-96, Asn-99, Asn-106, Gln-112, Asp-114, Asn-116, Tyr-120, and Trp-125. A disulfide bridge links Cys-52 with Cys-75. The propeptide at Thr-129–Lys-157 is removed in mature form.

Homotetramer.

It localises to the secreted. Its function is as follows. Mannose-specific lectin which binds alpha-D-linked mannose. Displays a high affinity for alpha-(1-3)-mannose oligomers. Displays antiviral activity and therefore may contribute to defense against infections. The chain is Mannose-specific lectin from Galanthus nivalis (Common snowdrop).